A 64-amino-acid polypeptide reads, in one-letter code: Conotoxin Pu3.4 (64 aa).

Residues 1-16 (LGVLLPICLLLFPLTA) form the signal peptide. Positions 17 to 49 (LPLDGDQPADRPAERMQDDFITEQHPLFDPVKR) are excised as a propeptide. 3 disulfides stabilise this stretch: Cys50–Cys63, Cys51–Cys59, and Cys55–Cys62. Pro61 is modified (4-hydroxyproline).

This sequence belongs to the conotoxin M superfamily. Expressed by the venom duct.

The protein localises to the secreted. The protein is Conotoxin Pu3.4 of Conus pulicarius (Flea-bitten cone).